Here is a 987-residue protein sequence, read N- to C-terminus: Voltage-gated delayed rectifier potassium channel KCNH1 (987 aa).

The Cytoplasmic segment spans residues 1–220; sequence MTMAGGRKGL…LHYCVFKTTW (220 aa). The PAS domain maps to 14–94; it reads QNTFLENIVR…QTFENYEMNS (81 aa). The region spanning 93-145 is the PAC domain; that stretch reads NSFEILMYKKNRTPVWFFVKIAPIRNEQDKVVLFLCTFSDITAFKQPIEDDSC. The tract at residues 151 to 162 is required for phosphatidylinositol bisphosphate binding; the sequence is FARLTRALTSSR. The chain crosses the membrane as a helical span at residues 221 to 241; the sequence is DWIILILTFYTAILVPYNVSF. Topologically, residues 242–248 are extracellular; sequence KTRQNNV. A helical membrane pass occupies residues 249 to 269; sequence AWLVVDSIVDVIFLVDIVLNF. Residues 270 to 290 are Cytoplasmic-facing; it reads HTTFVGPAGEVISDPKLIRMN. A helical membrane pass occupies residues 291–309; sequence YLKTWFVIDLLSCLPYDVI. Over 310 to 345 the chain is Extracellular; that stretch reads NAFENVDEVSAFMGDPGKIGFADQIPPPLEGRESQG. A helical; Voltage-sensor transmembrane segment spans residues 346–368; sequence ISSLFSSLKVVRLLRLGRVARKL. Residues 369–377 lie on the Cytoplasmic side of the membrane; that stretch reads DHYIEYGAA. The helical transmembrane segment at 378 to 399 threads the bilayer; sequence VLVLLVCVFGLAAHWMACIWYS. Residues 400 to 448 are Extracellular-facing; that stretch reads IGDYEIFDEDTKTIRNNSWLYQLAMDIGTPYQFNGSGSGKWEGGPSKNS. Residues N415 and N433 are each glycosylated (N-linked (GlcNAc...) asparagine). Positions 449 to 470 form an intramembrane region, pore-forming; it reads VYISSLYFTMTSLTSVGFGNIA. Positions 463–468 match the Selectivity filter motif; it reads SVGFGN. Over 471–477 the chain is Extracellular; sequence PSTDIEK. The chain crosses the membrane as a helical span at residues 478–498; the sequence is IFAVAIMMIGSLLYATIFGNV. Over 499–987 the chain is Cytoplasmic; sequence TTIFQQMYAN…ESERDIFGAS (489 aa). Residues 673-770 are calmodulin-binding; the sequence is KRDALQKVLE…LDDLDVEKGS (98 aa). The segment at 699 to 701 is interaction with cyclic nucleotide-binding pocket; the sequence is YNL. Residues 922 to 962 form a CAD (involved in subunit assembly) region; sequence AAVLEVKHELKEDIKALSTKMTSIEKQLSEILRILTSRRSS. The interval 960 to 987 is disordered; it reads RSSQSPQELFEISRPQSPESERDIFGAS. S972, S976, and S979 each carry phosphoserine. The span at 978–987 shows a compositional bias: basic and acidic residues; the sequence is ESERDIFGAS.

This sequence belongs to the potassium channel family. H (Eag) (TC 1.A.1.20) subfamily. Kv10.1/KCNH1 sub-subfamily. Homomultimer. The potassium channel is composed of a homo- or heterotetrameric complex of pore-forming alpha subunits that can associate with modulating beta subunits. Heteromultimer with KCNH5/EAG2. Interacts with ALG10B. Interacts with RABEP1. Interacts (via C-terminus) with CTTN. Interacts (via C-terminal cytoplasmic region) with Ca(2+)-bound calmodulin. In terms of processing, channel activity is regulated via tyrosine phosphorylation/dephosphorylation by SRC and PTPN6. As to expression, detected in cerebellum, cortex and retina.

It is found in the cell membrane. The protein resides in the nucleus inner membrane. It localises to the cell projection. Its subcellular location is the dendrite. The protein localises to the axon. It is found in the presynaptic cell membrane. The protein resides in the perikaryon. It localises to the postsynaptic density membrane. Its subcellular location is the early endosome membrane. It carries out the reaction K(+)(in) = K(+)(out). Its activity is regulated as follows. Channel activity is inhibited by interaction with Ca(2+)-bound calmodulin. Interaction of a single pore-forming alpha subunit with a calmodulin chain is sufficient to promote channel closure. Extracellular magnesium ion concentrations up to 4 mM modulate channel activity by slowing down current activation in a reversible fashion. Channel activity is not regulated by cyclic nucleotides. Channel activity is inhibited by binding intracellular phosphatidylinositol-3,5-bisphosphate and phosphatidylinositol-4,5-bisphosphate (PIP2), but is not inhibited by phosphatidylinositol 4-phosphate. Pore-forming (alpha) subunit of a voltage-gated delayed rectifier potassium channel that mediates outward-rectifying potassium currents which, on depolarization, reaches a steady-state level and do not inactivate. The activation kinetics depend on the prepulse potential and external divalent cation concentration. With negative prepulses, the current activation is delayed and slowed down several fold, whereas more positive prepulses speed up activation. The time course of activation is biphasic with a fast and a slowly activating current component. Activates at more positive membrane potentials and exhibit a steeper activation curve. Channel properties are modulated by subunit assembly. Mediates IK(NI) current in myoblasts. Involved in the regulation of cell proliferation and differentiation, in particular adipogenic and osteogenic differentiation in bone marrow-derived mesenchymal stem cells (MSCs). This Bos taurus (Bovine) protein is Voltage-gated delayed rectifier potassium channel KCNH1.